Consider the following 531-residue polypeptide: SWI/SNF-related matrix-associated actin-dependent regulator of chromatin subfamily D member 2 (531 aa).

The interval 20 to 85 (AVAAALGAPP…MSPGSRMPMA (66 aa)) is disordered. Residues 34-45 (PGMLPSPALRGP) are compositionally biased toward low complexity. An asymmetric dimethylarginine mark is found at arginine 81 and arginine 104. Serine 203 is subject to Phosphoserine. Residues 205–226 (SKADGDNAGTAGTPGGTPAADK) are disordered. Residues 210–225 (DNAGTAGTPGGTPAAD) are compositionally biased toward low complexity. Threonine 217 is modified (phosphothreonine). Residue lysine 226 forms a Glycyl lysine isopeptide (Lys-Gly) (interchain with G-Cter in SUMO2) linkage. One can recognise an SWIB/MDM2 domain in the interval 306-383 (HQPPQYKLDP…PMKLAGLLQH (78 aa)).

The protein belongs to the SMARCD family. Component of the multiprotein chromatin-remodeling complexes SWI/SNF: SWI/SNF-A (BAF), SWI/SNF-B (PBAF) and related complexes. The canonical complex contains a catalytic subunit (either SMARCA4/BRG1/BAF190A or SMARCA2/BRM/BAF190B), and at least SMARCE1, ACTL6A/BAF53, SMARCC1/BAF155, SMARCC2/BAF170, and SMARCB1/SNF5/BAF47. Other subunits specific to each of the complexes may also be present permitting several possible combinations developmentally and tissue specific. Component of the BAF complex, which includes at least actin (ACTB), ARID1A/BAF250A, ARID1B/BAF250B, SMARCA2/BRM, SMARCA4/BRG1, ACTL6A/BAF53, ACTL6B/BAF53B, SMARCE1/BAF57, SMARCC1/BAF155, SMARCC2/BAF170, SMARCB1/SNF5/INI1, and one or more SMARCD1/BAF60A, SMARCD2/BAF60B, or SMARCD3/BAF60C. In muscle cells, the BAF complex also contains DPF3. Component of the SWI/SNF-B (PBAF) chromatin remodeling complex, at least composed of SMARCA4/BRG1, SMARCB1/BAF47/SNF5, ACTL6A/BAF53A or ACTL6B/BAF53B, SMARCE1/BAF57, SMARCD1/BAF60A, SMARCD2/BAF60B, perhaps SMARCD3/BAF60C, SMARCC1/BAF155, SMARCC2/BAF170, PBRM1/BAF180, ARID2/BAF200 and actin (ACTB). Interacts with UNKL. Interacts with CEBPE. In terms of processing, ubiquitinated through a signaling process involving RAC1 and the RING finger protein UNKL.

The protein resides in the nucleus. In terms of biological role, involved in transcriptional activation and repression of select genes by chromatin remodeling (alteration of DNA-nucleosome topology). Component of SWI/SNF chromatin remodeling complexes that carry out key enzymatic activities, changing chromatin structure by altering DNA-histone contacts within a nucleosome in an ATP-dependent manner. Critical regulator of myeloid differentiation, controlling granulocytopoiesis and the expression of genes involved in neutrophil granule formation. This Mus musculus (Mouse) protein is SWI/SNF-related matrix-associated actin-dependent regulator of chromatin subfamily D member 2 (Smarcd2).